The following is a 485-amino-acid chain: Sodium-coupled neutral amino acid symporter 1 (485 aa).

The Cytoplasmic portion of the chain corresponds to 1 to 74 (MMHFKSGLEL…EYIPGTTSLG (74 aa)). Ser6 carries the post-translational modification Phosphoserine. The residue at position 11 (Thr11) is a Phosphothreonine. A phosphoserine mark is found at Ser25, Ser28, Ser49, and Ser52. Thr54 is subject to Phosphothreonine. Ser56 is subject to Phosphoserine. A helical transmembrane segment spans residues 75–97 (MSVFNLSNAIMGSGILGLAFALA). Residues 98–112 (NTGILLFLILLTSVT) lie on the Extracellular side of the membrane. Residues 113-133 (LLSIYSINLLLICSKETGCMV) form a helical membrane-spanning segment. Over 134-148 (YEKLGEQVFGTTGKL) the chain is Cytoplasmic. Residues 149–169 (VIFGATSLQNTGAMLSYLFIV) traverse the membrane as a helical segment. The Extracellular segment spans residues 170–188 (KNELPSAIKSLMGEEETFS). The helical transmembrane segment at 189–211 (AWYVDGRVLVVMVTFGIILPLCL) threads the bilayer. Topologically, residues 212 to 216 (LKNLG) are cytoplasmic. A helical membrane pass occupies residues 217–237 (YLGYTSGFSLSCMVFFLIVVI). Residues 238 to 273 (YKKFQIPCMNGEQNSTVSANVTDACTPKYVTFNSKT) lie on the Extracellular side of the membrane. A disulfide bridge links Cys245 with Cys262. N-linked (GlcNAc...) asparagine glycans are attached at residues Asn251 and Asn257. The chain crosses the membrane as a helical span at residues 274–294 (VYALPTIAFAFVCHPSVLPIY). Topologically, residues 295–310 (SELKDRSQKKMQMVSN) are cytoplasmic. The chain crosses the membrane as a helical span at residues 311 to 331 (ISFFAMFVMYFLTAIFGYLTF). The Extracellular portion of the chain corresponds to 332–348 (YEKVQSDLLHKYQSTGD). A helical transmembrane segment spans residues 349–369 (ILILTVRLAVIVAVILTVPVL). Over 370-391 (FFTVRSSLFELAKKTKFHLCRH) the chain is Cytoplasmic. Residues 392–412 (VLVTIILLVIINLLVIFIPSM) form a helical membrane-spanning segment. The Extracellular segment spans residues 413 to 414 (KD). The helical transmembrane segment at 415–435 (IFGVVGVTSANMLIFILPSSL) threads the bilayer. Over 436 to 450 (YLKITNQDGDKNTQR) the chain is Cytoplasmic. The helical transmembrane segment at 451–471 (IWAALFLALGVLFSLISIPLV) threads the bilayer. The Extracellular portion of the chain corresponds to 472-485 (IYDWACSSSNGEGH).

This sequence belongs to the amino acid/polyamine transporter 2 family. N-glycosylation plays an important role in the L-glutamine transport. Specifically expressed in brain with the highest levels in cerebellum and thalamus (at protein level). Expressed in glutamatergic, GABAergic and a subset of dopaminergic neurons of the substantia nigra and cholinergic motoneurons (at protein level). Also expressed by ependymal cells lining the ventricle (at protein level). Expression is also detected in spinal cord, heart, colon and placenta.

It is found in the cell membrane. It catalyses the reaction L-glutamine(in) + Na(+)(in) = L-glutamine(out) + Na(+)(out). The catalysed reaction is L-alanine(in) + Na(+)(in) = L-alanine(out) + Na(+)(out). It carries out the reaction L-asparagine(in) + Na(+)(in) = L-asparagine(out) + Na(+)(out). The enzyme catalyses L-histidine(in) + Na(+)(in) = L-histidine(out) + Na(+)(out). It catalyses the reaction L-serine(in) + Na(+)(in) = L-serine(out) + Na(+)(out). The catalysed reaction is L-cysteine(in) + Na(+)(in) = L-cysteine(out) + Na(+)(out). It carries out the reaction L-methionine(in) + Na(+)(in) = L-methionine(out) + Na(+)(out). The enzyme catalyses glycine(in) + Na(+)(in) = glycine(out) + Na(+)(out). It catalyses the reaction L-threonine(in) + Na(+)(in) = L-threonine(out) + Na(+)(out). The catalysed reaction is L-proline(in) + Na(+)(in) = L-proline(out) + Na(+)(out). With respect to regulation, inhibited by alpha-(methylamino)isobutyric acid (MeAIB). Inhibited by lithium, potassium, choline ions, N-methylglucamine. The pH dependence has an allosteric effect on the transport. In terms of biological role, symporter that cotransports short-chain neutral amino acids and sodium ions from the extraccellular to the intracellular side of the cell membrane. The transport is elctrogenic, pH dependent and driven by the Na(+) electrochemical gradient. Participates in the astroglia-derived glutamine transport into GABAergic interneurons for neurotransmitter GABA de novo synthesis. May also contributes to amino acid transport in placental trophoblast. Regulates synaptic plasticity. The protein is Sodium-coupled neutral amino acid symporter 1 of Rattus norvegicus (Rat).